The following is a 424-amino-acid chain: MTRTLLTDIAVATADHSKYGEEVLGLFRFKDETAFFEKASKIFPGVVLLETCNRVEILVHGSAKQLRDFLHGEQRFGFDILEGEAALMHLLELAAGTKSMIIGEDQILGQMRRALLLAESHDTNDVITDVCLNTAIREGVSIRQKTSINKGAVSIGSAAVLLAEELMGDLDGKNILVVGGGEMGTLVARALCEKNLRAIYVTNRSFDRAVLLAEEIKGRAMRLDQLYPCIALSDVVISCTGAPHLIIHADELAETMNERFWPLDLEPRHLLLIDIAQPRDIDDACRDVPGVSLKTLDDLKSISEKNLAARKTECEHADVLVKAALPEFIKAFNRAASGDLTKNLYTWAEEIRQREKNKALSRLRDADPYLESVIDDLTSALTKKLLEDAAKSIRASAECTDTQTAEILLKAIISGEVSCIRRSE.

Substrate is bound by residues 51–54, S99, 104–106, and Q110; these read TCNR and EDQ. Catalysis depends on C52, which acts as the Nucleophile. NADP(+) is bound at residue 179-184; it reads GGGEMG.

The protein belongs to the glutamyl-tRNA reductase family. As to quaternary structure, homodimer.

The catalysed reaction is (S)-4-amino-5-oxopentanoate + tRNA(Glu) + NADP(+) = L-glutamyl-tRNA(Glu) + NADPH + H(+). It functions in the pathway porphyrin-containing compound metabolism; protoporphyrin-IX biosynthesis; 5-aminolevulinate from L-glutamyl-tRNA(Glu): step 1/2. Functionally, catalyzes the NADPH-dependent reduction of glutamyl-tRNA(Glu) to glutamate 1-semialdehyde (GSA). The polypeptide is Glutamyl-tRNA reductase (Methanocorpusculum labreanum (strain ATCC 43576 / DSM 4855 / Z)).